The following is a 1468-amino-acid chain: Potassium channel K2 (1468 aa).

The next 6 membrane-spanning stretches (helical) occupy residues 48–68 (MIYIGIGILLKIILIIIYWIY), 146–165 (FNCYFCNTRDILYAIIWYIS), 185–209 (IYIYNILLILLSSSYIDLVMIIISY), 221–240 (LLIDVFFSSPSAFFFSRHFF), 246–264 (IDIYFLMGFLRIIKVFLNV), and 285–306 (IILGVLLLCNAFASTLYTIQGI). The segment at residues 326 to 344 (YFYFSIISISTVGYGDIIP) is an intramembrane region (pore-forming). Residues 351 to 368 (VICIFFIFWTFIWVPIQF) form a helical membrane-spanning segment. The tract at residues 804–823 (TCARTNESHKNNRLRSRRSQ) is disordered. The segment covering 814–823 (NNRLRSRRSQ) has biased composition (basic residues). Residues 1141 to 1185 (KSNKNSNNNNKCEQIKQLNNNLTFKKNEKKTKSNKQNTNDTLERR) adopt a coiled-coil conformation.

It localises to the membrane. May be involved in transmembrane potassium transport at the subcellular level not affecting bulk potassium transport across the plasma membrane. This is Potassium channel K2 from Plasmodium berghei (strain Anka).